A 193-amino-acid chain; its full sequence is dCTP deaminase (193 aa).

Residues 110-115 (RSSLAR), D128, 136-138 (VLE), Y171, K178, and Q182 each bind dCTP. Catalysis depends on E138, which acts as the Proton donor/acceptor.

The protein belongs to the dCTP deaminase family. In terms of assembly, homotrimer.

The enzyme catalyses dCTP + H2O + H(+) = dUTP + NH4(+). Its pathway is pyrimidine metabolism; dUMP biosynthesis; dUMP from dCTP (dUTP route): step 1/2. Catalyzes the deamination of dCTP to dUTP. The polypeptide is dCTP deaminase (Buchnera aphidicola subsp. Baizongia pistaciae (strain Bp)).